We begin with the raw amino-acid sequence, 172 residues long: 3-hydroxydecanoyl-[acyl-carrier-protein] dehydratase (172 aa).

Residue His71 is part of the active site.

The protein belongs to the thioester dehydratase family. FabA subfamily. As to quaternary structure, homodimer.

Its subcellular location is the cytoplasm. The enzyme catalyses a (3R)-hydroxyacyl-[ACP] = a (2E)-enoyl-[ACP] + H2O. It carries out the reaction (3R)-hydroxydecanoyl-[ACP] = (2E)-decenoyl-[ACP] + H2O. The catalysed reaction is (2E)-decenoyl-[ACP] = (3Z)-decenoyl-[ACP]. It functions in the pathway lipid metabolism; fatty acid biosynthesis. Functionally, necessary for the introduction of cis unsaturation into fatty acids. Catalyzes the dehydration of (3R)-3-hydroxydecanoyl-ACP to E-(2)-decenoyl-ACP and then its isomerization to Z-(3)-decenoyl-ACP. Can catalyze the dehydratase reaction for beta-hydroxyacyl-ACPs with saturated chain lengths up to 16:0, being most active on intermediate chain length. The sequence is that of 3-hydroxydecanoyl-[acyl-carrier-protein] dehydratase from Edwardsiella ictaluri (strain 93-146).